We begin with the raw amino-acid sequence, 429 residues long: Serine hydroxymethyltransferase (429 aa).

(6S)-5,6,7,8-tetrahydrofolate-binding positions include L133 and G137–L139. K243 carries the post-translational modification N6-(pyridoxal phosphate)lysine. E259 serves as a coordination point for (6S)-5,6,7,8-tetrahydrofolate.

Belongs to the SHMT family. As to quaternary structure, homodimer. Pyridoxal 5'-phosphate serves as cofactor.

Its subcellular location is the cytoplasm. The catalysed reaction is (6R)-5,10-methylene-5,6,7,8-tetrahydrofolate + glycine + H2O = (6S)-5,6,7,8-tetrahydrofolate + L-serine. It functions in the pathway one-carbon metabolism; tetrahydrofolate interconversion. It participates in amino-acid biosynthesis; glycine biosynthesis; glycine from L-serine: step 1/1. Catalyzes the reversible interconversion of serine and glycine with tetrahydrofolate (THF) serving as the one-carbon carrier. This reaction serves as the major source of one-carbon groups required for the biosynthesis of purines, thymidylate, methionine, and other important biomolecules. Also exhibits THF-independent aldolase activity toward beta-hydroxyamino acids, producing glycine and aldehydes, via a retro-aldol mechanism. The chain is Serine hydroxymethyltransferase from Aster yellows witches'-broom phytoplasma (strain AYWB).